The chain runs to 234 residues: Large ribosomal subunit protein uL1 (234 aa).

It belongs to the universal ribosomal protein uL1 family. Part of the 50S ribosomal subunit.

In terms of biological role, binds directly to 23S rRNA. The L1 stalk is quite mobile in the ribosome, and is involved in E site tRNA release. Its function is as follows. Protein L1 is also a translational repressor protein, it controls the translation of the L11 operon by binding to its mRNA. In Vibrio atlanticus (strain LGP32) (Vibrio splendidus (strain Mel32)), this protein is Large ribosomal subunit protein uL1.